The primary structure comprises 152 residues: MELTTRTMATAKNIALIAHDHCKTSLLAWSKKHKSLLKKHHLYATGTTGNLIQNETGLSVTNMLSGPMGGDQQIGSLISEGKIDVLIFFWDPLNSVPHDPDVKALLRLATVWNIPVATNLASADFIVSSPLFSESVDIQVPDYQHYLNGRLK.

Positions 6–152 (RTMATAKNIA…YQHYLNGRLK (147 aa)) constitute an MGS-like domain. Substrate is bound by residues histidine 19, lysine 23, 45–48 (TGTT), and 65–66 (SG). Catalysis depends on aspartate 71, which acts as the Proton donor/acceptor. Histidine 98 lines the substrate pocket.

It belongs to the methylglyoxal synthase family.

It catalyses the reaction dihydroxyacetone phosphate = methylglyoxal + phosphate. Functionally, catalyzes the formation of methylglyoxal from dihydroxyacetone phosphate. This chain is Methylglyoxal synthase, found in Photorhabdus laumondii subsp. laumondii (strain DSM 15139 / CIP 105565 / TT01) (Photorhabdus luminescens subsp. laumondii).